We begin with the raw amino-acid sequence, 625 residues long: Probable potassium transport system protein Kup (625 aa).

Transmembrane regions (helical) follow at residues 10–30 (LAAL…TSPL), 50–70 (LLGV…LKYV), 102–122 (YFPL…DSVI), 142–162 (FDPY…SVQA), 172–192 (FGPI…VNII), 215–235 (FLAF…EALY), 250–270 (WFLV…ALLL), 284–304 (LGAW…IIAS), 340–360 (IYIP…VVGF), 369–389 (AYGI…FFVI), 397–417 (LLLC…LFSA), and 422–442 (LFHG…LMLT).

This sequence belongs to the HAK/KUP transporter (TC 2.A.72) family.

Its subcellular location is the cell inner membrane. It carries out the reaction K(+)(in) + H(+)(in) = K(+)(out) + H(+)(out). Transport of potassium into the cell. Likely operates as a K(+):H(+) symporter. The chain is Probable potassium transport system protein Kup from Janthinobacterium sp. (strain Marseille) (Minibacterium massiliensis).